The chain runs to 254 residues: Gamma-glutamyl-gamma-aminobutyrate hydrolase (254 aa).

The Glutamine amidotransferase type-1 domain maps to R16 to E250. C114 (nucleophile) is an active-site residue. Catalysis depends on residues H222 and E224.

The protein belongs to the peptidase C26 family.

It catalyses the reaction 4-(gamma-L-glutamylamino)butanoate + H2O = 4-aminobutanoate + L-glutamate. It functions in the pathway amine and polyamine degradation; putrescine degradation; 4-aminobutanoate from putrescine: step 4/4. Functionally, involved in the breakdown of putrescine via hydrolysis of the gamma-glutamyl linkage of gamma-glutamyl-gamma-aminobutyrate. The polypeptide is Gamma-glutamyl-gamma-aminobutyrate hydrolase (puuD) (Escherichia coli O157:H7).